The following is a 1470-amino-acid chain: Gag-Pol polyprotein (1470 aa).

Gly-2 carries the N-myristoyl glycine; by host lipid modification. The Nuclear export signal motif lies at 16 to 22 (FEHIRLR). A Nuclear localization signal motif is present at residues 26 to 32 (KKKYQIK). The disordered stretch occupies residues 117–144 (AVTPPGGQQKNNTGGTATPGGSQNFPAQ). Positions 122-144 (GGQQKNNTGGTATPGGSQNFPAQ) are enriched in polar residues. CCHC-type zinc fingers lie at residues 398–415 (PKCY…QCPE) and 419–436 (IKCL…DCRG). The segment at 479 to 504 (KEAPAAVCRERETNEKSEQKPPSEQS) is disordered. The span at 486 to 504 (CRERETNEKSEQKPPSEQS) shows a compositional bias: basic and acidic residues. In terms of domain architecture, Peptidase A2 spans 531–602 (VKALLDTGAD…TPINIIGRNF (72 aa)). The active-site For protease activity; shared with dimeric partner is Asp-536. A Reverse transcriptase domain is found at 658 to 848 (EGKLSRVGGD…PPFEWMGYKL (191 aa)). Residues Asp-724, Asp-799, and Asp-800 each contribute to the Mg(2+) site. The tract at residues 841–849 (FEWMGYKLW) is RT 'primer grip'. The Tryptophan repeat motif motif lies at 1011 to 1027 (WEQWWADYWQVSWIPEW). Positions 1047 to 1170 (IPGEDVYYVD…IDKLVSKGVR (124 aa)) constitute an RNase H type-1 domain. 4 residues coordinate Mg(2+): Asp-1056, Glu-1091, Asp-1111, and Asp-1162. The Integrase-type zinc-finger motif lies at 1176 to 1217 (GRIEEAQEEHDRYHSNWRNLADTFGLPQIVAKEIVAMCPKCQ). 4 residues coordinate Zn(2+): His-1185, His-1189, Cys-1213, and Cys-1216. The Integrase catalytic domain occupies 1227–1377 (VDASPGVWQM…TAAERLINMI (151 aa)). Positions 1237 and 1289 each coordinate Mg(2+). The segment at residues 1396 to 1443 (FRVYYREGRDPVWKGPARLIWKGEGAVVLKEGEELKVVPRRKAKIIKD) is a DNA-binding region (integrase-type). Positions 1451–1470 (GDETHLEGAGGSDHQMAGDS) are disordered.

In terms of assembly, homotrimer. Interacts with gp41 (via C-terminus). Homodimer. The active site consists of two apposed aspartic acid residues. As to quaternary structure, heterodimer of p66 RT and p51 RT (RT p66/p51). Heterodimerization of RT is essential for DNA polymerase activity. Despite the sequence identities, p66 RT and p51 RT have distinct folding. In terms of assembly, homotetramer; may further associate as a homohexadecamer. The cofactor is Mg(2+). Post-translationally, specific enzymatic cleavages by the viral protease yield mature proteins. The protease is released by autocatalytic cleavage. The polyprotein is cleaved during and after budding, this process is termed maturation. Proteolytic cleavage of p66 RT removes the RNase H domain to yield the p51 RT subunit. Capsid protein p24 is phosphorylated.

It is found in the virion. It localises to the host nucleus. The protein localises to the host cytoplasm. Its subcellular location is the host cell membrane. It carries out the reaction Specific for a P1 residue that is hydrophobic, and P1' variable, but often Pro.. The enzyme catalyses Endohydrolysis of RNA in RNA/DNA hybrids. Three different cleavage modes: 1. sequence-specific internal cleavage of RNA. Human immunodeficiency virus type 1 and Moloney murine leukemia virus enzymes prefer to cleave the RNA strand one nucleotide away from the RNA-DNA junction. 2. RNA 5'-end directed cleavage 13-19 nucleotides from the RNA end. 3. DNA 3'-end directed cleavage 15-20 nucleotides away from the primer terminus.. The catalysed reaction is 3'-end directed exonucleolytic cleavage of viral RNA-DNA hybrid.. It catalyses the reaction DNA(n) + a 2'-deoxyribonucleoside 5'-triphosphate = DNA(n+1) + diphosphate. With respect to regulation, the viral protease is inhibited by many synthetic protease inhibitors (PIs), such as amprenavir, atazanavir, indinavir, loprinavir, nelfinavir, ritonavir and saquinavir. RT can be inhibited either by nucleoside RT inhibitors (NRTIs) or by non nucleoside RT inhibitors (NNRTIs). NRTIs act as chain terminators, whereas NNRTIs inhibit DNA polymerization by binding a small hydrophobic pocket near the RT active site and inducing an allosteric change in this region. Classical NRTIs are abacavir, adefovir (PMEA), didanosine (ddI), lamivudine (3TC), stavudine (d4T), tenofovir (PMPA), zalcitabine (ddC), and zidovudine (AZT). Classical NNRTIs are atevirdine (BHAP U-87201E), delavirdine, efavirenz (DMP-266), emivirine (I-EBU), and nevirapine (BI-RG-587). The tritherapies used as a basic effective treatment of AIDS associate two NRTIs and one NNRTI. Use of protease inhibitors in tritherapy regimens permit more ambitious therapeutic strategies. Its function is as follows. Gag-Pol polyprotein and Gag polyprotein may regulate their own translation, by the binding genomic RNA in the 5'-UTR. At low concentration, Gag-Pol and Gag would promote translation, whereas at high concentration, the polyproteins encapsidate genomic RNA and then shut off translation. In terms of biological role, matrix protein p17 has two main functions: in infected cell, it targets Gag and Gag-pol polyproteins to the plasma membrane via a multipartite membrane-binding signal, that includes its myristointegration complex. The myristoylation signal and the NLS exert conflicting influences its subcellular localization. The key regulation of these motifs might be phosphorylation of a portion of MA molecules on the C-terminal tyrosine at the time of virus maturation, by virion-associated cellular tyrosine kinase. Implicated in the release from host cell mediated by Vpu. Functionally, capsid protein p24 forms the conical core that encapsulates the genomic RNA-nucleocapsid complex in the virion. The core is constituted by capsid protein hexamer subunits. The core is disassembled soon after virion entry. Interaction with host PPIA/CYPA protects the virus from restriction by host TRIM5-alpha and from an unknown antiviral activity in host cells. This capsid restriction by TRIM5 is one of the factors which restricts SIV to the simian species. Nucleocapsid protein p7 encapsulates and protects viral dimeric unspliced (genomic) RNA. Binds these RNAs through its zinc fingers. Facilitates rearangement of nucleic acid secondary structure during retrotranscription of genomic RNA. This capability is referred to as nucleic acid chaperone activity. Its function is as follows. The aspartyl protease mediates proteolytic cleavages of Gag and Gag-Pol polyproteins during or shortly after the release of the virion from the plasma membrane. Cleavages take place as an ordered, step-wise cascade to yield mature proteins. This process is called maturation. Displays maximal activity during the budding process just prior to particle release from the cell. Also cleaves Nef and Vif, probably concomitantly with viral structural proteins on maturation of virus particles. Hydrolyzes host EIF4GI and PABP1 in order to shut off the capped cellular mRNA translation. The resulting inhibition of cellular protein synthesis serves to ensure maximal viral gene expression and to evade host immune response. In terms of biological role, reverse transcriptase/ribonuclease H (RT) is a multifunctional enzyme that converts the viral dimeric RNA genome into dsDNA in the cytoplasm, shortly after virus entry into the cell. This enzyme displays a DNA polymerase activity that can copy either DNA or RNA templates, and a ribonuclease H (RNase H) activity that cleaves the RNA strand of RNA-DNA heteroduplexes in a partially processive 3' to 5' endonucleasic mode. Conversion of viral genomic RNA into dsDNA requires many steps. A tRNA binds to the primer-binding site (PBS) situated at the 5'-end of the viral RNA. RT uses the 3' end of the tRNA primer to perform a short round of RNA-dependent minus-strand DNA synthesis. The reading proceeds through the U5 region and ends after the repeated (R) region which is present at both ends of viral RNA. The portion of the RNA-DNA heteroduplex is digested by the RNase H, resulting in a ssDNA product attached to the tRNA primer. This ssDNA/tRNA hybridizes with the identical R region situated at the 3' end of viral RNA. This template exchange, known as minus-strand DNA strong stop transfer, can be either intra- or intermolecular. RT uses the 3' end of this newly synthesized short ssDNA to perform the RNA-dependent minus-strand DNA synthesis of the whole template. RNase H digests the RNA template except for two polypurine tracts (PPTs) situated at the 5'-end and near the center of the genome. It is not clear if both polymerase and RNase H activities are simultaneous. RNase H can probably proceed both in a polymerase-dependent (RNA cut into small fragments by the same RT performing DNA synthesis) and a polymerase-independent mode (cleavage of remaining RNA fragments by free RTs). Secondly, RT performs DNA-directed plus-strand DNA synthesis using the PPTs that have not been removed by RNase H as primers. PPTs and tRNA primers are then removed by RNase H. The 3' and 5' ssDNA PBS regions hybridize to form a circular dsDNA intermediate. Strand displacement synthesis by RT to the PBS and PPT ends produces a blunt ended, linear dsDNA copy of the viral genome that includes long terminal repeats (LTRs) at both ends. Functionally, integrase catalyzes viral DNA integration into the host chromosome, by performing a series of DNA cutting and joining reactions. This enzyme activity takes place after virion entry into a cell and reverse transcription of the RNA genome in dsDNA. The first step in the integration process is 3' processing. This step requires a complex comprising the viral genome, matrix protein, Vpr and integrase. This complex is called the pre-integration complex (PIC). The integrase protein removes 2 nucleotides from each 3' end of the viral DNA, leaving recessed CA OH's at the 3' ends. In the second step, the PIC enters cell nucleus. This process is mediated through integrase and Vpr proteins, and allows the virus to infect a non dividing cell. This ability to enter the nucleus is specific of lentiviruses, other retroviruses cannot and rely on cell division to access cell chromosomes. In the third step, termed strand transfer, the integrase protein joins the previously processed 3' ends to the 5' ends of strands of target cellular DNA at the site of integration. The 5'-ends are produced by integrase-catalyzed staggered cuts, 5 bp apart. A Y-shaped, gapped, recombination intermediate results, with the 5'-ends of the viral DNA strands and the 3' ends of target DNA strands remaining unjoined, flanking a gap of 5 bp. The last step is viral DNA integration into host chromosome. This involves host DNA repair synthesis in which the 5 bp gaps between the unjoined strands are filled in and then ligated. Since this process occurs at both cuts flanking the SIV genome, a 5 bp duplication of host DNA is produced at the ends of SIV integration. Alternatively, Integrase may catalyze the excision of viral DNA just after strand transfer, this is termed disintegration. The polypeptide is Gag-Pol polyprotein (gag-pol) (Cercopithecidae (Old World monkeys)).